A 476-amino-acid chain; its full sequence is Probable serine carboxypeptidase CPVL (476 aa).

A signal peptide spans 1–22 (MVGTMWKVIVSLVLLMPGSCDG). Asn81 and Asn132 each carry an N-linked (GlcNAc...) asparagine glycan. Ser204 is an active-site residue. N-linked (GlcNAc...) asparagine glycosylation is found at Asn307 and Asn346. Active-site residues include Asp388 and His448.

Belongs to the peptidase S10 family.

Its function is as follows. May be involved in the digestion of phagocytosed particles in the lysosome, participation in an inflammatory protease cascade, and trimming of peptides for antigen presentation. This chain is Probable serine carboxypeptidase CPVL (CPVL), found in Pongo abelii (Sumatran orangutan).